A 203-amino-acid polypeptide reads, in one-letter code: Nascent polypeptide-associated complex subunit alpha-like protein 1 (203 aa).

Positions 1–23 are enriched in basic and acidic residues; that stretch reads MTTEEKEILAAKLEEQKIDLDKP. The segment at 1–71 is disordered; that stretch reads MTTEEKEILA…SEKKSRKAML (71 aa). Acidic residues predominate over residues 24-50; sequence EVEDDDDNEDDDSDDDDKDDDEADGLD. Phosphoserine is present on serine 36. The region spanning 60 to 125 is the NAC-A/B domain; sequence SRSEKKSRKA…AKIEDLSSQI (66 aa). The region spanning 158-203 is the UBA domain; it reads EVDEEGVEPKDIELVMTQAGVSRPNAVKALKAADGDIVSAIMELTT.

It belongs to the NAC-alpha family.

Functionally, may promote appropriate targeting of ribosome-nascent polypeptide complexes. The sequence is that of Nascent polypeptide-associated complex subunit alpha-like protein 1 from Arabidopsis thaliana (Mouse-ear cress).